The sequence spans 277 residues: Putative thiosulfate sulfurtransferase mpst-4 (277 aa).

Rhodanese domains follow at residues Asn-15–Ser-153 and Ser-155–Asn-243. Cys-204 functions as the Cysteine persulfide intermediate in the catalytic mechanism.

The enzyme catalyses thiosulfate + hydrogen cyanide = thiocyanate + sulfite + 2 H(+). The protein is Putative thiosulfate sulfurtransferase mpst-4 of Caenorhabditis elegans.